A 408-amino-acid polypeptide reads, in one-letter code: Tyrosine--tRNA ligase (408 aa).

Tyr-35 serves as a coordination point for L-tyrosine. Residues 40-49 (PTADSLHVGH) carry the 'HIGH' region motif. Residues Tyr-168 and Gln-172 each coordinate L-tyrosine. The 'KMSKS' region motif lies at 228-232 (KMGKT). Lys-231 serves as a coordination point for ATP. The S4 RNA-binding domain maps to 342–407 (INIIDLLLKT…GKKTYHRVKL (66 aa)).

It belongs to the class-I aminoacyl-tRNA synthetase family. TyrS type 1 subfamily. In terms of assembly, homodimer.

The protein localises to the cytoplasm. The enzyme catalyses tRNA(Tyr) + L-tyrosine + ATP = L-tyrosyl-tRNA(Tyr) + AMP + diphosphate + H(+). Its function is as follows. Catalyzes the attachment of tyrosine to tRNA(Tyr) in a two-step reaction: tyrosine is first activated by ATP to form Tyr-AMP and then transferred to the acceptor end of tRNA(Tyr). The chain is Tyrosine--tRNA ligase from Acetivibrio thermocellus (strain ATCC 27405 / DSM 1237 / JCM 9322 / NBRC 103400 / NCIMB 10682 / NRRL B-4536 / VPI 7372) (Clostridium thermocellum).